We begin with the raw amino-acid sequence, 155 residues long: Ribosomal RNA large subunit methyltransferase H (155 aa).

S-adenosyl-L-methionine-binding positions include leucine 72, glycine 103, and 122-127 (LSPLTL).

This sequence belongs to the RNA methyltransferase RlmH family. As to quaternary structure, homodimer.

It localises to the cytoplasm. It carries out the reaction pseudouridine(1915) in 23S rRNA + S-adenosyl-L-methionine = N(3)-methylpseudouridine(1915) in 23S rRNA + S-adenosyl-L-homocysteine + H(+). In terms of biological role, specifically methylates the pseudouridine at position 1915 (m3Psi1915) in 23S rRNA. The protein is Ribosomal RNA large subunit methyltransferase H of Aeromonas hydrophila subsp. hydrophila (strain ATCC 7966 / DSM 30187 / BCRC 13018 / CCUG 14551 / JCM 1027 / KCTC 2358 / NCIMB 9240 / NCTC 8049).